We begin with the raw amino-acid sequence, 549 residues long: NAC domain-containing protein 53 (549 aa).

The region spanning L9–K159 is the NAC domain. Residues V108–K165 mediate DNA binding. Basic and acidic residues predominate over residues L395–S416. The segment at L395–S418 is disordered. Residues L526–V546 traverse the membrane as a helical segment.

Expressed in roots, rosette leaves, cauline leaves, shoot apex and stems.

It is found in the endoplasmic reticulum membrane. It localises to the nucleus. Its function is as follows. Transcriptional activator activated by proteolytic cleavage through regulated intramembrane proteolysis (RIP). Promotes reactive oxygen species (ROS) production during drought-induced leaf senescence. In response to abscisic acid (ABA)-mediated drought stress signals, binds directly to the promoters of RBOHC and RBOHE genes, encoding ROS biosynthetic enzymes, resulting in ROS accumulation and triggering leaf senescence via programmed cell death (PCD). ROS-induced leaf senescence sustains plant survival under drought conditions. Involved in heat stress response. Modulates PCD through a ROS-mediated positive feedback control under heat stress conditions. This may provide an adaptation strategy for plant survival under extreme heat stress conditions. Acts as a repressor in preventing anther dehiscence during stamen development by suppressing genes that participate in jasmonic acid (JA) biosynthesis, such as DAD1, AOS, AOC3, OPR3 and 4CLL5/OPCL1. This is NAC domain-containing protein 53 from Arabidopsis thaliana (Mouse-ear cress).